Consider the following 196-residue polypeptide: Homeobox protein XENK-2 (196 aa).

Residues 48–72 form a disordered region; that stretch reads PSADESPDNDKELSSNPDSGKKRKR. The homeobox DNA-binding region spans 69 to 128; it reads KRKRRVLFSKAQTYELERRFRQQRYLSAPEREHLASLIRLTPTQVKIWFQNHRYKMKRAR.

It belongs to the NK-2 homeobox family. Forebrain and midbrain.

It localises to the nucleus. In terms of biological role, defines dorsal-ventral domains in developing brain. May play a role in defining positional information along the anterior-posterior (a/p) axis and the dorsal-ventral (d/v) axis of the developing nervous system. May be involved in determining positional or boundary information rather than determining a given cell type. The protein is Homeobox protein XENK-2 of Xenopus laevis (African clawed frog).